A 176-amino-acid polypeptide reads, in one-letter code: RING-H2 finger protein ATL14 (176 aa).

Residues 1–26 are disordered; sequence MSITIPYDGSISREPSPSPPPPKANT. Residues 37–57 traverse the membrane as a helical segment; it reads FLIGLIMIPVAITAFIFILTS. Residues 115 to 157 form an RING-type; atypical zinc finger; that stretch reads CVVCIDGFRQGQWCRKLPRCGHVFHRKCVDLWLIKVSTCPICR.

The protein belongs to the RING-type zinc finger family. ATL subfamily.

It is found in the membrane. It catalyses the reaction S-ubiquitinyl-[E2 ubiquitin-conjugating enzyme]-L-cysteine + [acceptor protein]-L-lysine = [E2 ubiquitin-conjugating enzyme]-L-cysteine + N(6)-ubiquitinyl-[acceptor protein]-L-lysine.. It participates in protein modification; protein ubiquitination. The polypeptide is RING-H2 finger protein ATL14 (ATL14) (Arabidopsis thaliana (Mouse-ear cress)).